The chain runs to 957 residues: Glycine dehydrogenase (decarboxylating) (957 aa).

Lysine 708 carries the N6-(pyridoxal phosphate)lysine modification.

The protein belongs to the GcvP family. In terms of assembly, the glycine cleavage system is composed of four proteins: P, T, L and H. Pyridoxal 5'-phosphate is required as a cofactor.

It carries out the reaction N(6)-[(R)-lipoyl]-L-lysyl-[glycine-cleavage complex H protein] + glycine + H(+) = N(6)-[(R)-S(8)-aminomethyldihydrolipoyl]-L-lysyl-[glycine-cleavage complex H protein] + CO2. Its function is as follows. The glycine cleavage system catalyzes the degradation of glycine. The P protein binds the alpha-amino group of glycine through its pyridoxal phosphate cofactor; CO(2) is released and the remaining methylamine moiety is then transferred to the lipoamide cofactor of the H protein. The sequence is that of Glycine dehydrogenase (decarboxylating) from Salmonella heidelberg (strain SL476).